Reading from the N-terminus, the 154-residue chain is MWFFNKNLKVLAPCDGTIITLDEVEDEVFKERMLGDGFAINPKSNDFHAPVSGKLVTAFPTKHAFGIQTKSGVEILLHIGLDTVSLDGNGFESFVTQDQEVNAGDKLVTVDLKSVAKKVPSIKSPIIFTNNGGKTLEIVKMGEVKQGDVVAILK.

The PTS EIIA type-1 domain occupies 26–130 (DEVFKERMLG…SIKSPIIFTN (105 aa)). Zn(2+)-binding residues include His-63 and His-78. His-78 (tele-phosphohistidine intermediate; for EIIA activity) is an active-site residue. Position 78 is a phosphohistidine; by HPr (His-78).

In terms of assembly, heterodimer with glycerol kinase (glpk). Requires Zn(2+) as cofactor.

It localises to the cytoplasm. Functionally, the phosphoenolpyruvate-dependent sugar phosphotransferase system (sugar PTS), a major carbohydrate active transport system, catalyzes the phosphorylation of incoming sugar substrates concomitantly with their translocation across the cell membrane. The enzyme II complex composed of PtsG and Crr is involved in glucose transport. The protein is PTS system glucose-specific EIIA component (crr) of Mycoplasma capricolum subsp. capricolum (strain California kid / ATCC 27343 / NCTC 10154).